A 145-amino-acid polypeptide reads, in one-letter code: D-aminoacyl-tRNA deacylase (145 aa).

The Gly-cisPro motif, important for rejection of L-amino acids signature appears at 137–138 (GP).

The protein belongs to the DTD family. As to quaternary structure, homodimer.

It is found in the cytoplasm. It catalyses the reaction glycyl-tRNA(Ala) + H2O = tRNA(Ala) + glycine + H(+). The catalysed reaction is a D-aminoacyl-tRNA + H2O = a tRNA + a D-alpha-amino acid + H(+). Functionally, an aminoacyl-tRNA editing enzyme that deacylates mischarged D-aminoacyl-tRNAs. Also deacylates mischarged glycyl-tRNA(Ala), protecting cells against glycine mischarging by AlaRS. Acts via tRNA-based rather than protein-based catalysis; rejects L-amino acids rather than detecting D-amino acids in the active site. By recycling D-aminoacyl-tRNA to D-amino acids and free tRNA molecules, this enzyme counteracts the toxicity associated with the formation of D-aminoacyl-tRNA entities in vivo and helps enforce protein L-homochirality. The polypeptide is D-aminoacyl-tRNA deacylase (Pseudomonas paraeruginosa (strain DSM 24068 / PA7) (Pseudomonas aeruginosa (strain PA7))).